The following is a 180-amino-acid chain: UPF0227 protein YcfP (180 aa).

Belongs to the UPF0227 family.

The protein is UPF0227 protein YcfP of Escherichia coli O7:K1 (strain IAI39 / ExPEC).